The sequence spans 218 residues: DNA-directed RNA polymerase III subunit RPC7-like (218 aa).

The disordered stretch occupies residues Leu-133–Tyr-218. Basic and acidic residues predominate over residues Lys-139–Glu-160. Composition is skewed to acidic residues over residues Val-161–Asp-193 and Asn-201–Tyr-218.

This sequence belongs to the eukaryotic RPC7 RNA polymerase subunit family. Component of the RNA polymerase III (Pol III) complex consisting of 17 subunits. Pol III exists as two alternative complexes defined by the mutually exclusive incorporation of subunit POLR3G/RPC7alpha or POLR3GL/RPC7beta. Found in a trimeric complex with POLR3C/RPC3 and POLR3F/RPC6. Directly interacts with POLR3C. As to expression, widely expressed. Expressed in CD4-positive T cells.

Its subcellular location is the nucleus. DNA-dependent RNA polymerase catalyzes the transcription of DNA into RNA using the four ribonucleoside triphosphates as substrates. Specific peripheric component of RNA polymerase III which synthesizes small RNAs, such as 5S rRNA and tRNAs. The protein is DNA-directed RNA polymerase III subunit RPC7-like of Homo sapiens (Human).